The following is a 527-amino-acid chain: Coiled-coil domain-containing protein 148 (527 aa).

2 coiled-coil regions span residues 289–353 (LAKD…TEIK) and 401–438 (LEKRLMERKKLALQEVQEEEERERRLEALRKQVAVAVQ).

This chain is Coiled-coil domain-containing protein 148 (Ccdc148), found in Mus musculus (Mouse).